We begin with the raw amino-acid sequence, 1923 residues long: GREB1-like protein (1923 aa).

The span at 87 to 96 shows a compositional bias: acidic residues; it reads EDDEDDEEMS. Disordered regions lie at residues 87–111, 246–326, and 1101–1222; these read EDDEDDEEMSDSNSPPIPYSQKPAP, SCHS…GPPK, and RAAV…RGCR. Low complexity predominate over residues 252 to 262; the sequence is PSSSVSSTVTP. 3 stretches are compositionally biased toward polar residues: residues 263–278, 296–307, and 1119–1161; these read ENGTTNGYKSGFTQTD, TPAHTGNYSLSP, and PQSN…SPAT. Positions 1195 to 1206 are enriched in low complexity; sequence SSTTSKPSSSSS. Residues 1843 to 1862 form a helical membrane-spanning segment; sequence GVFFSGLLLYLCDSFVGADL.

It belongs to the GREB1 family. As to expression, widely expressed, with prominent expression in the cochlea. Expressed at high levels in fetal kidney. In adult tissues, highest levels in vagina, cervix and epididymis.

It is found in the membrane. Functionally, plays a major role in early metanephros and genital development. The chain is GREB1-like protein (GREB1L) from Homo sapiens (Human).